Consider the following 389-residue polypeptide: MVGWSGNPLFDLFKLPEEHNELRATIRALAEKEIAPHAADVDQRARFPEEALAALNASGFNAIHVPEEYGGQGADSVAACIVIEEVARVDASASLIPAVNKLGTMGLILRGSEELKKQVLPSLAAEGAMASYALSEREAGSDAASMRTRAKADGDDWILNGFKCWITNGGKSTWYTVMAVTDPDKGANGISAFIVHKDDEGFSIGPKEKKLGIKGSPTTELYFDKCRIPGDRIIGEPGTGFKTALATLDHTRPTIGAQAVGIAQGALDAAIVYTKDRKQFGESISTFQSIQFMLADMAMKVEAARLIVYAAAARAERGEPDLGFISAASKCFASDIAMEVTTDAVQLFGGAGYTSDFPVERFMRDAKITQIYEGTNQIQRVVMSRALLR.

It belongs to the acyl-CoA dehydrogenase family. It depends on FAD as a cofactor.

The enzyme catalyses a 2,3-saturated acyl-CoA + A = a 2,3-dehydroacyl-CoA + AH2. This Mycobacterium leprae (strain TN) protein is Probable acyl-CoA dehydrogenase fadE25 (fadE25).